Here is a 482-residue protein sequence, read N- to C-terminus: Beta-1,3-glucan-binding protein 2 (482 aa).

Positions 1–18 (MWIKSVCLFATIAGCLGQ) are cleaved as a signal peptide. One can recognise a CBM39 domain in the interval 23–122 (YKVPDAKLEA…GEWTVTEFVN (100 aa)). Asn-124 is a glycosylation site (N-linked (GlcNAc...) asparagine). Residues 127–153 (VVDTSTAPPPVAPAVSEEDQSPGPQWR) form a disordered region. Positions 128–482 (VDTSTAPPPV…KVDYVRVYAL (355 aa)) constitute a GH16 domain. Residue Asn-189 is glycosylated (N-linked (GlcNAc...) asparagine).

In terms of assembly, monomer. Post-translationally, N-glycosylated. Cuticle and fat body.

The protein localises to the secreted. Its function is as follows. Involved in the recognition of invading microorganisms. Binds specifically to beta-1,3-glucan and lipoteichoic acid and causes aggregation of invading microorganisms. Binding to beta-1,3-glucan activates the phenoloxidase cascade. This Manduca sexta (Tobacco hawkmoth) protein is Beta-1,3-glucan-binding protein 2.